We begin with the raw amino-acid sequence, 370 residues long: Histidinol-phosphate aminotransferase (370 aa).

Lys-229 carries the N6-(pyridoxal phosphate)lysine modification.

The protein belongs to the class-II pyridoxal-phosphate-dependent aminotransferase family. Histidinol-phosphate aminotransferase subfamily. In terms of assembly, homodimer. Pyridoxal 5'-phosphate serves as cofactor.

The catalysed reaction is L-histidinol phosphate + 2-oxoglutarate = 3-(imidazol-4-yl)-2-oxopropyl phosphate + L-glutamate. It participates in amino-acid biosynthesis; L-histidine biosynthesis; L-histidine from 5-phospho-alpha-D-ribose 1-diphosphate: step 7/9. This is Histidinol-phosphate aminotransferase from Helicobacter hepaticus (strain ATCC 51449 / 3B1).